The following is a 280-amino-acid chain: Merozoite surface protein 2 (280 aa).

Positions 1-20 are cleaved as a signal peptide; that stretch reads MKVIKTLSIINFFIFVTFNI. N-linked (GlcNAc...) asparagine glycans are attached at residues asparagine 22 and asparagine 36. The interval 44–206 is polymorphic region; the sequence is ANEGSNTKSV…PQTAENENPA (163 aa). Residues 47–242 are disordered; sequence GSNTKSVGAN…SQKECTDGNK (196 aa). The interval 51–74 is 5 X 12 AA tandem repeats of P-P-I-T-T-T-E-S-N-S-R-S; the sequence is KSVGANAPKADTIASGSQSSTNSA. The span at 64-98 shows a compositional bias: low complexity; sequence ASGSQSSTNSASTSTTNNGESQTTTPTAADTPTAT. A compositionally biased stretch (polar residues) spans 99–149; that stretch reads ESNSRSPPITTTESNSRSPPITTTESNSRSPPITTTESNSRSPPITTTESN. Repeat copies occupy residues 105-116, 117-128, 129-140, and 141-152. Positions 150–163 are enriched in low complexity; the sequence is SRSPPITTTESSSS. The stretch at 153 to 160 is one 5; partial repeat; sequence PPITTTES. The N-linked (GlcNAc...) asparagine glycan is linked to asparagine 168. Basic and acidic residues predominate over residues 170 to 182; it reads TDGKGEESEKQNE. N-linked (GlcNAc...) asparagine glycans are attached at residues asparagine 184 and asparagine 229. A compositionally biased stretch (basic and acidic residues) spans 233-242; that stretch reads SQKECTDGNK. Cysteines 237 and 245 form a disulfide. N-linked (GlcNAc...) asparagine glycosylation is found at asparagine 253 and asparagine 254. Asparagine 254 carries GPI-anchor amidated asparagine lipidation. Positions 255–280 are cleaved as a propeptide — removed in mature form; sequence SSNIASINKFVVLISATLVLSFAIFI.

The protein localises to the cell membrane. In terms of biological role, may play a role in the merozoite attachment to the erythrocyte. This Plasmodium falciparum (isolate K1 / Thailand) protein is Merozoite surface protein 2.